The following is a 267-amino-acid chain: Deoxyribose-phosphate aldolase (267 aa).

The Proton donor/acceptor role is filled by D123. The active-site Schiff-base intermediate with acetaldehyde is the K185. K217 functions as the Proton donor/acceptor in the catalytic mechanism.

Belongs to the DeoC/FbaB aldolase family. DeoC type 1 subfamily.

It is found in the cytoplasm. It carries out the reaction 2-deoxy-D-ribose 5-phosphate = D-glyceraldehyde 3-phosphate + acetaldehyde. It participates in carbohydrate degradation; 2-deoxy-D-ribose 1-phosphate degradation; D-glyceraldehyde 3-phosphate and acetaldehyde from 2-deoxy-alpha-D-ribose 1-phosphate: step 2/2. Its function is as follows. Catalyzes a reversible aldol reaction between acetaldehyde and D-glyceraldehyde 3-phosphate to generate 2-deoxy-D-ribose 5-phosphate. The sequence is that of Deoxyribose-phosphate aldolase from Coccidioides immitis (strain RS) (Valley fever fungus).